A 230-amino-acid chain; its full sequence is Urease accessory protein UreF (230 aa).

This sequence belongs to the UreF family. As to quaternary structure, ureD, UreF and UreG form a complex that acts as a GTP-hydrolysis-dependent molecular chaperone, activating the urease apoprotein by helping to assemble the nickel containing metallocenter of UreC. The UreE protein probably delivers the nickel.

Its subcellular location is the cytoplasm. Required for maturation of urease via the functional incorporation of the urease nickel metallocenter. The chain is Urease accessory protein UreF from Cupriavidus pinatubonensis (strain JMP 134 / LMG 1197) (Cupriavidus necator (strain JMP 134)).